The sequence spans 883 residues: Valine--tRNA ligase (883 aa).

A 'HIGH' region motif is present at residues 51 to 61; it reads PNVTGKLHLGH. The 'KMSKS' region motif lies at 527–531; that stretch reads KMSKS. Residue Lys-530 coordinates ATP. Residues 811-847 are a coiled coil; it reads LEALIDLNVEIARLEKELEKWNKEVARVQGKLNNERF.

The protein belongs to the class-I aminoacyl-tRNA synthetase family. ValS type 1 subfamily. As to quaternary structure, monomer.

The protein localises to the cytoplasm. The catalysed reaction is tRNA(Val) + L-valine + ATP = L-valyl-tRNA(Val) + AMP + diphosphate. Functionally, catalyzes the attachment of valine to tRNA(Val). As ValRS can inadvertently accommodate and process structurally similar amino acids such as threonine, to avoid such errors, it has a 'posttransfer' editing activity that hydrolyzes mischarged Thr-tRNA(Val) in a tRNA-dependent manner. This chain is Valine--tRNA ligase, found in Listeria monocytogenes serovar 1/2a (strain ATCC BAA-679 / EGD-e).